Here is an 84-residue protein sequence, read N- to C-terminus: Cell division topological specificity factor (84 aa).

The protein belongs to the MinE family.

In terms of biological role, prevents the cell division inhibition by proteins MinC and MinD at internal division sites while permitting inhibition at polar sites. This ensures cell division at the proper site by restricting the formation of a division septum at the midpoint of the long axis of the cell. The polypeptide is Cell division topological specificity factor (Paraburkholderia phytofirmans (strain DSM 17436 / LMG 22146 / PsJN) (Burkholderia phytofirmans)).